A 147-amino-acid polypeptide reads, in one-letter code: Peptide methionine sulfoxide reductase MsrA (147 aa).

Cysteine 10 is a catalytic residue.

The protein belongs to the MsrA Met sulfoxide reductase family.

It catalyses the reaction L-methionyl-[protein] + [thioredoxin]-disulfide + H2O = L-methionyl-(S)-S-oxide-[protein] + [thioredoxin]-dithiol. The catalysed reaction is [thioredoxin]-disulfide + L-methionine + H2O = L-methionine (S)-S-oxide + [thioredoxin]-dithiol. In terms of biological role, has an important function as a repair enzyme for proteins that have been inactivated by oxidation. Catalyzes the reversible oxidation-reduction of methionine sulfoxide in proteins to methionine. The chain is Peptide methionine sulfoxide reductase MsrA from Pelagibacter ubique (strain HTCC1062).